Here is a 137-residue protein sequence, read N- to C-terminus: Large ribosomal subunit protein uL16 (137 aa).

The protein belongs to the universal ribosomal protein uL16 family. As to quaternary structure, part of the 50S ribosomal subunit.

In terms of biological role, binds 23S rRNA and is also seen to make contacts with the A and possibly P site tRNAs. This chain is Large ribosomal subunit protein uL16, found in Xanthomonas campestris pv. campestris (strain 8004).